The primary structure comprises 513 residues: MEGRGFSGLYKNSSEELFLKTVMESPIGMPVPTMEMLGFKTVSQSFRTDSEELFKRWLTNDQEGYNSSSMGLNSRLSKRISTEIANMSNQQHIGVASEGRNNDKSCLQNNFLANDVSSDFNFPIRDPVDRELQSSNLFLAKAWFITDQRMTRSRSSELRRRYTEMQNSQAPQGLDSMFMVPEHDTNTIKEELANFNGFDYLSMCELPSQKGTFMSPSNSSSSTFNTHQLVDVDKVSSCVSMLKGTLQRKKLECQVEKEAAEDGLNEIFCIREPLFQSAFNEEESWNQQKLVNVQGDFTDQVNDPGVMQTLEGTTNFVLDGFANQTNQIQGRTASGEPSQSESSAAAPVISSGLDACEGPSNSNQTLGDSSWKQVGESTQNKVRGVREQIMDNLKDDRKRKSLERYGSVTSAVSDGKMDNTKKRRVERSRKMAEAKERNLTPTIPSDMQAILKRCENLEKEVRSLKLNLSFMNRKDSEQTKQIEDLQKQNEDLADEKERLLEEIERILSETGKI.

Disordered stretches follow at residues 329-380 and 395-435; these read QGRT…STQN and DDRK…AEAK. Residues 333-347 show a composition bias toward low complexity; it reads ASGEPSQSESSAAAP. The segment covering 359–380 has biased composition (polar residues); it reads PSNSNQTLGDSSWKQVGESTQN. 2 consecutive short sequence motifs (nuclear localization signal) follow at residues 397-400 and 421-424; these read RKRK and KKRR. Residues 447–513 are a coiled coil; the sequence is MQAILKRCEN…ERILSETGKI (67 aa).

This sequence belongs to the CYCLOPS family. As to quaternary structure, forms homodimers. Interacts with CCAMK. In terms of tissue distribution, highly expressed in roots. Expressed in root hairs and nodules. Not detected in leaves or flowers.

It is found in the nucleus. In terms of biological role, involved symbiotic signaling. Required for root infection by symbiotic rhizobia, infection thread (IT) formation, and nodule development. Required for proper induction of early nodulin gene expression. Probably not involved in nodule organogenesis. Involved in arbuscular mycorrhizal (AM) symbiosis. Required for fungal infection of the outer cortical cell layers, and for arbuscule development during the AM symbiosis. Acts downstream of CCAMK. Required for symbiosome formation (i.e. the release of the bacteria from the ITs) and subsequent symbiosome development. Required for the expression of the nodule-specific RPG gene, which controls proper IT growth and is essential for symbiosome formation. Acts upstream of ERN1, a transcriptional regulator required for nodulation. The chain is Protein CYCLOPS from Medicago truncatula (Barrel medic).